The following is a 316-amino-acid chain: MSIKEQTLMTPYLQFDRNQWAALRDSVPMTLSEDEIARLKGINEDLSLEEVAEIYLPLSRLLNFYISSNLRRQAVLEQFLGTNGQRIPYIISIAGSVAVGKSTTARVLQALLSRWPEHRRVELITTDGFLHPNQVLKERGLMKKKGFPESYDMHRLVKFVSDLKSGVPNVTAPVYSHLIYDVIPDGDKTVVQPDILILEGLNVLQSGMDYPHDPHHVFVSDFVDFSIYVDAPEDLLQTWYINRFLKFREGAFTDPDSYFHNYAKLTKEEAINTAMTLWKEINWLNLKQNILPTRERASLILTKSANHAVEEVRLRK.

Position 95–102 (95–102) interacts with ATP; the sequence is GSVAVGKS.

The protein belongs to the prokaryotic pantothenate kinase family.

Its subcellular location is the cytoplasm. It carries out the reaction (R)-pantothenate + ATP = (R)-4'-phosphopantothenate + ADP + H(+). The protein operates within cofactor biosynthesis; coenzyme A biosynthesis; CoA from (R)-pantothenate: step 1/5. This is Pantothenate kinase from Escherichia coli O17:K52:H18 (strain UMN026 / ExPEC).